Consider the following 410-residue polypeptide: Peptidase T-like protein YPO1009/y3403/YP_3421 (410 aa).

A Zn(2+)-binding site is contributed by His-82. The active site involves Asp-84. Asp-144 provides a ligand contact to Zn(2+). Catalysis depends on Glu-176, which acts as the Proton acceptor. Residues Glu-177, Asp-200, and His-382 each coordinate Zn(2+).

The protein belongs to the peptidase M20B family. Zn(2+) is required as a cofactor.

This is Peptidase T-like protein YPO1009/y3403/YP_3421 from Yersinia pestis.